Consider the following 165-residue polypeptide: Phosphopantetheine adenylyltransferase (165 aa).

Ser-9 contacts substrate. ATP-binding positions include 9-10 (SF) and His-17. 3 residues coordinate substrate: Lys-41, Ile-75, and Arg-89. ATP contacts are provided by residues 90 to 92 (GVR), Glu-100, and 125 to 131 (YLFVRSD).

It belongs to the bacterial CoaD family. As to quaternary structure, homohexamer. The cofactor is Mg(2+).

Its subcellular location is the cytoplasm. It catalyses the reaction (R)-4'-phosphopantetheine + ATP + H(+) = 3'-dephospho-CoA + diphosphate. The protein operates within cofactor biosynthesis; coenzyme A biosynthesis; CoA from (R)-pantothenate: step 4/5. Reversibly transfers an adenylyl group from ATP to 4'-phosphopantetheine, yielding dephospho-CoA (dPCoA) and pyrophosphate. The polypeptide is Phosphopantetheine adenylyltransferase (Borrelia turicatae (strain 91E135)).